The sequence spans 189 residues: Protein GrpE (189 aa).

A compositionally biased stretch (basic and acidic residues) spans 1-14; that stretch reads MTDHTPLQPKHEIT. Positions 1 to 23 are disordered; it reads MTDHTPLQPKHEITDQADQDTSA.

This sequence belongs to the GrpE family. In terms of assembly, homodimer.

The protein resides in the cytoplasm. In terms of biological role, participates actively in the response to hyperosmotic and heat shock by preventing the aggregation of stress-denatured proteins, in association with DnaK and GrpE. It is the nucleotide exchange factor for DnaK and may function as a thermosensor. Unfolded proteins bind initially to DnaJ; upon interaction with the DnaJ-bound protein, DnaK hydrolyzes its bound ATP, resulting in the formation of a stable complex. GrpE releases ADP from DnaK; ATP binding to DnaK triggers the release of the substrate protein, thus completing the reaction cycle. Several rounds of ATP-dependent interactions between DnaJ, DnaK and GrpE are required for fully efficient folding. In Lawsonia intracellularis (strain PHE/MN1-00), this protein is Protein GrpE.